We begin with the raw amino-acid sequence, 20 residues long: Octopamine receptor (20 aa).

The protein belongs to the G-protein coupled receptor 1 family.

Its subcellular location is the cell membrane. Its function is as follows. Putative receptor for octopamine. Octopamine (OA) is a neurotransmitter, neurohormone, and neuromodulator in invertebrates. The activity of this receptor is mediated by G proteins which activate adenylyl cyclase. In Photinus pyralis (Common eastern firefly), this protein is Octopamine receptor.